Consider the following 280-residue polypeptide: Divalent cation/proton antiporter GDT1 (280 aa).

Over 1-3 (MGN) the chain is Cytoplasmic. Residues 4-24 (MIKKASLIALLPLFTAAAAAA) form a helical membrane-spanning segment. Topologically, residues 25-45 (TDAETSMESGSSSHLKSFLMS) are vacuolar. Residues 46-66 (VSMIGLSEIGDKTFLIAALMA) form a helical membrane-spanning segment. The Cytoplasmic portion of the chain corresponds to 67–71 (MRHKR). A helical transmembrane segment spans residues 72 to 92 (VLVFSAAATSLAIMTILSGVV). Topologically, residues 93 to 104 (GHSAVAFLSERY) are vacuolar. A helical transmembrane segment spans residues 105 to 125 (TAFFAGILFLVFGYKLTMEGL). Topologically, residues 126–183 (EMSKDAGVEEEMAEVEEEIAIKDMNQDMDDVEKGGDTAYDKQLKNASIGKKIVHRIRE) are cytoplasmic. The helical transmembrane segment at 184 to 204 (LASFMFSPVWVQIFLMVFLGE) threads the bilayer. Residues 205 to 222 (LGDRSQISIIAMATDSDY) lie on the Vacuolar side of the membrane. Residues 223-243 (WYVIAGAVIGHAICSGLAVVG) form a helical membrane-spanning segment. Topologically, residues 244-255 (GKLLATRISIRT) are cytoplasmic. A helical transmembrane segment spans residues 256 to 276 (ITLASSLLFFIFALMYIYQAF). Residues 277-280 (TTQD) are Vacuolar-facing.

Belongs to the GDT1 family.

The protein localises to the golgi apparatus. It localises to the cis-Golgi network membrane. It carries out the reaction Ca(2+)(in) + n H(+)(out) = Ca(2+)(out) + n H(+)(in). The catalysed reaction is Mn(2+)(in) + n H(+)(out) = Mn(2+)(out) + n H(+)(in). Divalent cation:proton antiporter that exchanges calcium or manganese ions for protons across the Golgi membrane. Mediates the reversible transport of calcium or manganese to the Golgi lumen driven by the proton gradient and possibly the membrane potential generated by V-ATPase. Provides calcium or manganese cofactors to resident Golgi enzymes and contributes to the maintenance of an acidic luminal Golgi pH required for proper functioning of the secretory pathway. The transport stoichiometry remains to be elucidated. This Saccharomyces cerevisiae (strain ATCC 204508 / S288c) (Baker's yeast) protein is Divalent cation/proton antiporter GDT1.